Reading from the N-terminus, the 272-residue chain is Proteasome subunit beta (272 aa).

The propeptide at 1–47 is removed in mature form; by autocatalysis; that stretch reads MSTGGDRLPEAFLRPGSSSFVEFLREVAPQSHPEHARPAGAGDVVHA. T48 acts as the Nucleophile in catalysis.

It belongs to the peptidase T1B family. The 20S proteasome core is composed of 14 alpha and 14 beta subunits that assemble into four stacked heptameric rings, resulting in a barrel-shaped structure. The two inner rings, each composed of seven catalytic beta subunits, are sandwiched by two outer rings, each composed of seven alpha subunits. The catalytic chamber with the active sites is on the inside of the barrel. Has a gated structure, the ends of the cylinder being occluded by the N-termini of the alpha-subunits. Is capped by the proteasome-associated ATPase, ARC.

It localises to the cytoplasm. It catalyses the reaction Cleavage of peptide bonds with very broad specificity.. It participates in protein degradation; proteasomal Pup-dependent pathway. The formation of the proteasomal ATPase ARC-20S proteasome complex, likely via the docking of the C-termini of ARC into the intersubunit pockets in the alpha-rings, may trigger opening of the gate for substrate entry. Interconversion between the open-gate and close-gate conformations leads to a dynamic regulation of the 20S proteasome proteolysis activity. Its function is as follows. Component of the proteasome core, a large protease complex with broad specificity involved in protein degradation. The sequence is that of Proteasome subunit beta from Beutenbergia cavernae (strain ATCC BAA-8 / DSM 12333 / CCUG 43141 / JCM 11478 / NBRC 16432 / NCIMB 13614 / HKI 0122).